Reading from the N-terminus, the 179-residue chain is Apoptosis regulator Bcl-2 homolog (179 aa).

A BH1 motif is present at residues 76 to 95 (ELFKDLINWGRICGFIVFSA). A BH2 motif is present at residues 126–141 (PWMISHGGQEEFLAFS).

It belongs to the Bcl-2 family. As to quaternary structure, interacts with host BECN1 (via BH3 homology domain); this interaction allows the virus to inhibit BECN1, and thus autophagy. Interacts with host BID. Interacts with host BAX.

The protein localises to the host mitochondrion. It localises to the host endoplasmic reticulum. Functionally, suppresses apoptosis in host cell to promote the viral replication. Has the ability to potentially bind to all the members of the proapoptotic Bcl-2 family. Inhibits autophagy by interacting with host Beclin 1 (BECN1). The chain is Apoptosis regulator Bcl-2 homolog from African swine fever virus (isolate Pig/Kenya/KEN-50/1950) (ASFV).